The primary structure comprises 173 residues: Chorion protein S19 (173 aa).

A signal peptide spans 1–21; it reads MNKFATLAVIFCACIVGSCYA.

This sequence belongs to the chorion protein S19 family.

The protein resides in the secreted. Its function is as follows. Chorion membrane (egg shell) protein; plays a role in protecting the egg from the environment. In Drosophila melanogaster (Fruit fly), this protein is Chorion protein S19 (Cp19).